The primary structure comprises 84 residues: RNA-binding protein Hfq (84 aa).

Residues 11-71 (DTFLNHVRKN…ISTIMPGHPV (61 aa)) enclose the Sm domain.

It belongs to the Hfq family. Homohexamer.

Its function is as follows. RNA chaperone that binds small regulatory RNA (sRNAs) and mRNAs to facilitate mRNA translational regulation in response to envelope stress, environmental stress and changes in metabolite concentrations. Also binds with high specificity to tRNAs. The chain is RNA-binding protein Hfq from Methylorubrum populi (strain ATCC BAA-705 / NCIMB 13946 / BJ001) (Methylobacterium populi).